The primary structure comprises 337 residues: UbiA prenyltransferase domain-containing protein 1 (337 aa).

The residue at position 2 (Ala-2) is an N-acetylalanine. Helical transmembrane passes span 82 to 102, 133 to 153, 159 to 179, 187 to 207, 208 to 228, 244 to 266, 276 to 296, and 314 to 334; these read LLVG…LVNT, FGVF…CLSP, LALI…GIGF, LVIL…VQVG, SLAV…EAVL, IVTL…LLFL, THCS…FSLE, and LNLL…AGSL.

It belongs to the UbiA prenyltransferase family. As to quaternary structure, interacts with HMGCR and SOAT1.

The protein resides in the endoplasmic reticulum membrane. It is found in the golgi apparatus membrane. Its subcellular location is the mitochondrion membrane. The catalysed reaction is menadiol + (2E,6E,10E)-geranylgeranyl diphosphate = menaquinol-4 + diphosphate. It carries out the reaction all-trans-decaprenyl diphosphate + 4-hydroxybenzoate = 4-hydroxy-3-(all-trans-decaprenyl)benzoate + diphosphate. Its pathway is quinol/quinone metabolism; menaquinone biosynthesis. The protein operates within cofactor biosynthesis; ubiquinone biosynthesis. Its function is as follows. Prenyltransferase that mediates the formation of menaquinone-4 (MK-4) and coenzyme Q10. MK-4 is a vitamin K2 isoform required for endothelial cell development. Mediates the conversion of phylloquinone (PK) into MK-4, probably by cleaving the side chain of phylloquinone (PK) to release 2-methyl-1,4-naphthoquinone (menadione; K3) and then prenylating it with geranylgeranyl pyrophosphate (GGPP) to form MK-4. Also plays a role in cardiovascular development independently of MK-4 biosynthesis, by acting as a coenzyme Q10 biosynthetic enzyme: coenzyme Q10, also named ubiquinone, plays an important antioxidant role in the cardiovascular system. Mediates biosynthesis of coenzyme Q10 in the Golgi membrane, leading to protect cardiovascular tissues from NOS3/eNOS-dependent oxidative stress. This chain is UbiA prenyltransferase domain-containing protein 1 (UBIAD1), found in Ailuropoda melanoleuca (Giant panda).